Reading from the N-terminus, the 317-residue chain is Single myb histone 6 (317 aa).

Residues 1 to 61 (MGAPKQRWTS…KWRNMNVIVS (61 aa)) form the HTH myb-type domain. The H-T-H motif DNA-binding region spans 28-57 (WRTILKDPEFSSTLCYRSNVDLKDKWRNMN). Residues 121–189 (KSHRLDNIIM…KVNRKYRIAP (69 aa)) enclose the H15 domain. Positions 244-288 (VAAARAVAEAEAIMAEAEAAAKEAEAAEAEAQAAQAFAEAAFLTL) form a coiled coil.

It belongs to the histone H1/H5 family. SMH subfamily. Forms a homodimer and heterodimers.

It localises to the nucleus. Its subcellular location is the chromosome. It is found in the nucleolus. The protein localises to the telomere. Its function is as follows. Binds preferentially double-stranded telomeric repeats, but may also bind to the single telomeric strand. The chain is Single myb histone 6 (SMH6) from Zea mays (Maize).